The chain runs to 195 residues: UPF0301 protein CCNA_03506 (195 aa).

Belongs to the UPF0301 (AlgH) family.

This chain is UPF0301 protein CCNA_03506, found in Caulobacter vibrioides (strain NA1000 / CB15N) (Caulobacter crescentus).